Here is a 228-residue protein sequence, read N- to C-terminus: Lipoprotein-releasing system ATP-binding protein LolD (228 aa).

In terms of domain architecture, ABC transporter spans 8-228 (LQAKKLVKAY…ELHDGLLRRL (221 aa)). Position 44 to 51 (44 to 51 (GASGSGKS)) interacts with ATP.

Belongs to the ABC transporter superfamily. Lipoprotein translocase (TC 3.A.1.125) family. As to quaternary structure, the complex is composed of two ATP-binding proteins (LolD) and two transmembrane proteins (LolC and LolE).

It localises to the cell inner membrane. In terms of biological role, part of the ABC transporter complex LolCDE involved in the translocation of mature outer membrane-directed lipoproteins, from the inner membrane to the periplasmic chaperone, LolA. Responsible for the formation of the LolA-lipoprotein complex in an ATP-dependent manner. The chain is Lipoprotein-releasing system ATP-binding protein LolD from Alcanivorax borkumensis (strain ATCC 700651 / DSM 11573 / NCIMB 13689 / SK2).